A 390-amino-acid chain; its full sequence is MDSFKFIQKKILLLGSGELGKELVVEAKRLGLEVIAIDKYENAPAMQLADHSFVINMNDKKTLINTIKKIEPDFVVPEIEALSIEALKELEEEGINIVPNARTVEITMNRHKIRDLASKELNIKTANFSYVFNAEELEMKSSEIGFPLLLKPLMSSSGKGQSLVKRKEDLLLAWEDALKNSRGKIEGVILEEFLNFDYEFTLLTVRKSSGENVFCEPIGHEQYKGDYQCSWQPLDMNESLINEARNMTNKILNNLNGSGIYGVEFFVRGKEVIFSELSPRPHDTGMVTLVSQNLNEFELHLRAFLNLPIPKISLLKPSATRVILSEKESINPSYTGLNEALEVENTKVLIFGKPTSKKGRRMGVVLSSDDDLNIARKNADKSASKIKIVS.

N(1)-(5-phospho-beta-D-ribosyl)glycinamide is bound by residues 18–19 (EL) and glutamate 78. ATP contacts are provided by residues arginine 110, lysine 151, 156–161 (SSGKGQ), 191–194 (EEFL), and glutamate 199. One can recognise an ATP-grasp domain in the interval 115–305 (DLASKELNIK…EFELHLRAFL (191 aa)). Residues glutamate 264 and glutamate 276 each coordinate Mg(2+). Residues aspartate 283, lysine 353, and 360–361 (RR) contribute to the N(1)-(5-phospho-beta-D-ribosyl)glycinamide site.

It belongs to the PurK/PurT family. In terms of assembly, homodimer.

It carries out the reaction N(1)-(5-phospho-beta-D-ribosyl)glycinamide + formate + ATP = N(2)-formyl-N(1)-(5-phospho-beta-D-ribosyl)glycinamide + ADP + phosphate + H(+). Its pathway is purine metabolism; IMP biosynthesis via de novo pathway; N(2)-formyl-N(1)-(5-phospho-D-ribosyl)glycinamide from N(1)-(5-phospho-D-ribosyl)glycinamide (formate route): step 1/1. In terms of biological role, involved in the de novo purine biosynthesis. Catalyzes the transfer of formate to 5-phospho-ribosyl-glycinamide (GAR), producing 5-phospho-ribosyl-N-formylglycinamide (FGAR). Formate is provided by PurU via hydrolysis of 10-formyl-tetrahydrofolate. This Prochlorococcus marinus (strain MIT 9515) protein is Formate-dependent phosphoribosylglycinamide formyltransferase.